The primary structure comprises 334 residues: Glutaredoxin-3 (334 aa).

Position 2 is an N-acetylalanine (Ala-2). The Thioredoxin domain maps to 2 to 116 (AGGAAEAAAA…LTKKVQRHAS (115 aa)). A disordered region spans residues 110 to 131 (KVQRHASSGSFSPSGSEHPKED). Phosphoserine is present on residues Ser-116 and Ser-119. Low complexity predominate over residues 116–125 (SSGSFSPSGS). Glutaredoxin domains follow at residues 145 to 235 (CMLF…PKLE) and 236 to 334 (ERLK…KGEN). [2Fe-2S] cluster-binding residues include Cys-158 and Cys-260.

Homodimer; the homodimer is independent of 2Fe-2S clusters. Heterotrimer; forms a heterotrimeric complex composed by two BOLA2 molecules and one GLRX3 molecule; linked by [2Fe-2S] clusters. Interacts (via N-terminus) with PRKCQ/PKC-theta. Interacts (via C-terminus) with CSRP3. Interacts with CSRP2.

Its subcellular location is the cytoplasm. The protein localises to the cytosol. The protein resides in the cell cortex. It is found in the myofibril. It localises to the sarcomere. Its subcellular location is the z line. Functionally, together with BOLA2, acts as a cytosolic iron-sulfur (Fe-S) cluster assembly factor that facilitates [2Fe-2S] cluster insertion into a subset of cytosolic proteins. Acts as a critical negative regulator of cardiac hypertrophy and a positive inotropic regulator. Required for hemoglobin maturation. Does not possess any thyoredoxin activity since it lacks the conserved motif that is essential for catalytic activity. This chain is Glutaredoxin-3 (GLRX3), found in Bos taurus (Bovine).